Here is a 1305-residue protein sequence, read N- to C-terminus: DNA-directed DNA polymerase (1305 aa).

This sequence belongs to the DNA polymerase type-C family.

It carries out the reaction DNA(n) + a 2'-deoxyribonucleoside 5'-triphosphate = DNA(n+1) + diphosphate. In terms of biological role, replicates viral genomic DNA. The protein is DNA-directed DNA polymerase of Bacillus pumilus (Bacillus mesentericus).